The chain runs to 553 residues: MALALASANSFLLPTKTHFALHVSPPPSKKTLLCTNPSSNFSFNKALSSRRRKQAWCVAAAADVKDATLLDGEEDQKVLVGPSSEQERKGEREVADYDWTEEWYPLYLTKNVPHDAPLGLKVYDKNIVLFRDGNDQFQCYEDRCPHRLAKLSEGQLIDGRLECLYHGWQFEGEGKCVKIPQLPADAKIPKSACVKTYEVRDSQGVLWVWMSRKTPPNVSKIPWFENFARPGFQDISTTHELPYDHSILLENLMDPAHVPISHDRTDWSAKREDAQALGFEVTERTDRGFAGWWGREKDGSKPNFLRFEAPCVLQNNREIVDKNGEINHFSGLFLCRPTGQGKSMLIVRFGATKRSPLIKLFPEWYFHQNASKVFEQDMGFLSSQNEILLKEKVPTKELYLNLKSSDTWVAEYRKWMDKVGHGMPYHFGHSTISLPEEPAVVEHAPAGLVAGLSASSPAKGGIGTMHAPNLANRYFRHVIHCKGCSSAIKAFQIWKNVLSGVVVALAALAILVSGRQWKVLLLASASLCSVGVYACSTAIAMNTTNFIRVHRRL.

Residues 1–60 constitute a chloroplast transit peptide; sequence MALALASANSFLLPTKTHFALHVSPPPSKKTLLCTNPSSNFSFNKALSSRRRKQAWCVAA. The Stromal segment spans residues 61 to 492; that stretch reads AADVKDATLL…GCSSAIKAFQ (432 aa). The Rieske domain maps to 103-208; the sequence is WYPLYLTKNV…VRDSQGVLWV (106 aa). [2Fe-2S] cluster is bound by residues cysteine 144, histidine 146, cysteine 163, and histidine 166. Fe cation is bound by residues histidine 257 and histidine 262. Residues 493–513 form a helical membrane-spanning segment; the sequence is IWKNVLSGVVVALAALAILVS. Topologically, residues 514-518 are chloroplast intermembrane; sequence GRQWK. Residues 519–539 traverse the membrane as a helical segment; it reads VLLLASASLCSVGVYACSTAI. Topologically, residues 540 to 553 are stromal; it reads AMNTTNFIRVHRRL.

As to quaternary structure, part of the Tic complex. Interacts with TIC62 and TIC110. The cofactor is [2Fe-2S] cluster.

The protein localises to the plastid. The protein resides in the chloroplast inner membrane. Its function is as follows. Involved in protein precursor import into chloroplasts. Part of the redox regulon consisting of TIC32, TIC 55 and TIC62. This is Protein TIC 55, chloroplastic (TIC55) from Pisum sativum (Garden pea).